The sequence spans 254 residues: MANLGYWLLALFVTMWTDVGLCKKRPKPGGWNTGGSRYPGQGSPGGNRYPPQGGTWGQPHGGGWGQPHGGSWGQPHGGSWGQPHGGGWGQGGGTHNQWNKPSKPKTNLKHVAGAAAAGAVVGGLGGYMLGSAMSRPMIHFGNDWEDRYYRENMYRYPNQVYYRPVDQYSNQNNFVHDCVNITIKQHTVTTTTKGENFTETDVKMMERVVEQMCVTQYQKESQAYYDGRRSSSTVLFSSPPVILLISFLIFLIVG.

Residues 1–22 (MANLGYWLLALFVTMWTDVGLC) form the signal peptide. Residues 23–38 (KKRPKPGGWNTGGSRY) are interaction with ADGRG6. The interval 23–231 (KKRPKPGGWN…QAYYDGRRSS (209 aa)) is interaction with GRB2, ERI3 and SYN1. The interval 25–104 (RPKPGGWNTG…HNQWNKPSKP (80 aa)) is disordered. Position 44 is a hydroxyproline (Pro-44). Tandem repeats lie at residues 51-58 (PQGGTWGQ), 59-66 (PHGGGWGQ), 67-74 (PHGGSWGQ), 75-82 (PHGGSWGQ), and 83-90 (PHGGGWGQ). Residues 51-90 (PQGGTWGQPHGGGWGQPHGGSWGQPHGGSWGQPHGGGWGQ) form a 5 X 8 AA tandem repeats of P-H-G-G-G-W-G-Q region. Residues 54-94 (GTWGQPHGGGWGQPHGGSWGQPHGGSWGQPHGGGWGQGGGT) are compositionally biased toward gly residues. Cu(2+)-binding residues include His-60, Gly-61, Gly-62, His-68, Gly-69, Gly-70, His-76, Gly-77, Gly-78, His-84, Gly-85, and Gly-86. The cysteines at positions 178 and 213 are disulfide-linked. Asn-180 and Asn-196 each carry an N-linked (GlcNAc...) asparagine glycan. Ser-230 carries GPI-anchor amidated serine lipidation. A propeptide spans 231–254 (SSTVLFSSPPVILLISFLIFLIVG) (removed in mature form).

It belongs to the prion family. In terms of assembly, monomer and homodimer. Has a tendency to aggregate into amyloid fibrils containing a cross-beta spine, formed by a steric zipper of superposed beta-strands. Soluble oligomers may represent an intermediate stage on the path to fibril formation. Copper binding may promote oligomerization. Interacts with GRB2, APP, ERI3/PRNPIP and SYN1. Mislocalized cytosolically exposed PrP interacts with MGRN1; this interaction alters MGRN1 subcellular location and causes lysosomal enlargement. Interacts with APP. Interacts with KIAA1191. Interacts with ADGRG6. In terms of processing, N-glycosylated. In terms of tissue distribution, highly expressed in the brain, lung, kidney and heart. Expressed at low levels in the liver and spleen.

It localises to the cell membrane. It is found in the golgi apparatus. Its primary physiological function is unclear. May play a role in neuronal development and synaptic plasticity. May be required for neuronal myelin sheath maintenance. May promote myelin homeostasis through acting as an agonist for ADGRG6 receptor. May play a role in iron uptake and iron homeostasis. Soluble oligomers are toxic to cultured neuroblastoma cells and induce apoptosis (in vitro). Association with GPC1 (via its heparan sulfate chains) targets PRNP to lipid rafts. Also provides Cu(2+) or Zn(2+) for the ascorbate-mediated GPC1 deaminase degradation of its heparan sulfate side chains. The polypeptide is Major prion protein (Prnp) (Mus musculus (Mouse)).